The following is a 359-amino-acid chain: Peptide chain release factor 1 (359 aa).

Position 236 is an N5-methylglutamine (glutamine 236).

Belongs to the prokaryotic/mitochondrial release factor family. Methylated by PrmC. Methylation increases the termination efficiency of RF1.

The protein localises to the cytoplasm. Its function is as follows. Peptide chain release factor 1 directs the termination of translation in response to the peptide chain termination codons UAG and UAA. The sequence is that of Peptide chain release factor 1 from Streptococcus agalactiae.